We begin with the raw amino-acid sequence, 408 residues long: MQIKALSVSEVNQYMKRILGSDPILSHIYVKGEISNYRLHSSGHMYFTLKDKNSKISCVMFKGNCEKLKFFPEEGMSLVCKGYVSIYEKDGQVQLYVNDMEPSGIGALHLAFQQLKDRLNKEGLFDTKYKQEIPLIPRRIALITSPTGAAIRDMVSIILRRFPQVELCIFPVLVQGEGAVETIVKAIELCNRYPGIDLAIVGRGGGSIEELWAFNEEKVARAIFNSRVPIISAVGHETDFTISDFVADLRAATPSSAAELAVPNRVELREYIDSMEKRMIHLMKTKLNTSYQKLSFIENSYFFRYPLNPIYDKQQYINDLLQKIKSAINVKKQFNHRHLKYLGERLHSLSPLSIFSRGYSIVRNSEGSIVKSTDHVQVDERLCIDVIDGEINCKVIECKKEEKILGKY.

The protein belongs to the XseA family. In terms of assembly, heterooligomer composed of large and small subunits.

It localises to the cytoplasm. The catalysed reaction is Exonucleolytic cleavage in either 5'- to 3'- or 3'- to 5'-direction to yield nucleoside 5'-phosphates.. Functionally, bidirectionally degrades single-stranded DNA into large acid-insoluble oligonucleotides, which are then degraded further into small acid-soluble oligonucleotides. The polypeptide is Exodeoxyribonuclease 7 large subunit (Alkaliphilus oremlandii (strain OhILAs) (Clostridium oremlandii (strain OhILAs))).